The sequence spans 258 residues: Deoxyribose-phosphate aldolase (258 aa).

The Proton donor/acceptor role is filled by aspartate 101. The active-site Schiff-base intermediate with acetaldehyde is the lysine 166. The active-site Proton donor/acceptor is the lysine 200.

This sequence belongs to the DeoC/FbaB aldolase family. DeoC type 2 subfamily.

Its subcellular location is the cytoplasm. It carries out the reaction 2-deoxy-D-ribose 5-phosphate = D-glyceraldehyde 3-phosphate + acetaldehyde. It functions in the pathway carbohydrate degradation; 2-deoxy-D-ribose 1-phosphate degradation; D-glyceraldehyde 3-phosphate and acetaldehyde from 2-deoxy-alpha-D-ribose 1-phosphate: step 2/2. Catalyzes a reversible aldol reaction between acetaldehyde and D-glyceraldehyde 3-phosphate to generate 2-deoxy-D-ribose 5-phosphate. In Actinobacillus pleuropneumoniae serotype 3 (strain JL03), this protein is Deoxyribose-phosphate aldolase.